A 377-amino-acid polypeptide reads, in one-letter code: Nitric oxide reductase FlRd-NAD(+) reductase (377 aa).

This sequence belongs to the FAD-dependent oxidoreductase family. It depends on FAD as a cofactor.

It localises to the cytoplasm. The enzyme catalyses 2 reduced [nitric oxide reductase rubredoxin domain] + NAD(+) + H(+) = 2 oxidized [nitric oxide reductase rubredoxin domain] + NADH. It participates in nitrogen metabolism; nitric oxide reduction. Functionally, one of at least two accessory proteins for anaerobic nitric oxide (NO) reductase. Reduces the rubredoxin moiety of NO reductase. The chain is Nitric oxide reductase FlRd-NAD(+) reductase from Escherichia coli O7:K1 (strain IAI39 / ExPEC).